The sequence spans 161 residues: MAQTITSLADLKQGPGAEPAGLSAEPQEPKLDKEGRAYATGKRKDAVARVWIKPGSGKIIVNGRDLGVYFARPVLRMMINQPFSIVARVDQYDVMCTVSGGGLSGQAGALRHGISKALTYYEPALRPALKAAGLLTRDPRVVERKKYGRAKARRSFQFSKR.

The tract at residues 1–38 (MAQTITSLADLKQGPGAEPAGLSAEPQEPKLDKEGRAY) is disordered. Residues 27-38 (QEPKLDKEGRAY) are compositionally biased toward basic and acidic residues.

The protein belongs to the universal ribosomal protein uS9 family.

The polypeptide is Small ribosomal subunit protein uS9 (Rhodospirillum centenum (strain ATCC 51521 / SW)).